Here is a 195-residue protein sequence, read N- to C-terminus: Molybdenum cofactor guanylyltransferase (195 aa).

Residues 10 to 12 (LAG), Lys23, Asn51, Asp69, and Asp99 each bind GTP. Asp99 lines the Mg(2+) pocket.

Belongs to the MobA family. Monomer. Mg(2+) is required as a cofactor.

The protein localises to the cytoplasm. The catalysed reaction is Mo-molybdopterin + GTP + H(+) = Mo-molybdopterin guanine dinucleotide + diphosphate. Functionally, transfers a GMP moiety from GTP to Mo-molybdopterin (Mo-MPT) cofactor (Moco or molybdenum cofactor) to form Mo-molybdopterin guanine dinucleotide (Mo-MGD) cofactor. This chain is Molybdenum cofactor guanylyltransferase, found in Histophilus somni (strain 2336) (Haemophilus somnus).